Reading from the N-terminus, the 147-residue chain is Hemoglobin subunit delta (147 aa).

One can recognise a Globin domain in the interval 3–147; the sequence is HLTPEEKALV…VANALAHKYH (145 aa). Phosphoserine is present on S51. Positions 64 and 93 each coordinate heme b.

Belongs to the globin family. Heterotetramer of two delta chains and two alpha chains. Red blood cells.

In Trichechus manatus (Caribbean manatee), this protein is Hemoglobin subunit delta (HBD).